A 376-amino-acid polypeptide reads, in one-letter code: Dihydroorotate dehydrogenase (quinone) (376 aa).

Residues 74–78 (AGFDK) and Thr-98 contribute to the FMN site. Lys-78 is a substrate binding site. 123-127 (NRMGF) contacts substrate. Residues Asn-155 and Asn-188 each coordinate FMN. Residue Asn-188 participates in substrate binding. The active-site Nucleophile is the Ser-191. Residue Asn-193 coordinates substrate. 2 residues coordinate FMN: Lys-226 and Thr-254. 255-256 (NT) contacts substrate. Residues Gly-284, Gly-313, and 334-335 (YT) contribute to the FMN site.

Belongs to the dihydroorotate dehydrogenase family. Type 2 subfamily. Monomer. FMN is required as a cofactor.

Its subcellular location is the cell membrane. The enzyme catalyses (S)-dihydroorotate + a quinone = orotate + a quinol. Its pathway is pyrimidine metabolism; UMP biosynthesis via de novo pathway; orotate from (S)-dihydroorotate (quinone route): step 1/1. In terms of biological role, catalyzes the conversion of dihydroorotate to orotate with quinone as electron acceptor. The sequence is that of Dihydroorotate dehydrogenase (quinone) from Nostoc punctiforme (strain ATCC 29133 / PCC 73102).